The following is a 212-amino-acid chain: Small ribosomal subunit protein uS2 (212 aa).

The interval 190–212 (LSPDAPEDQPAPVSEFETKVKMV) is disordered.

Belongs to the universal ribosomal protein uS2 family.

The polypeptide is Small ribosomal subunit protein uS2 (Ignicoccus hospitalis (strain KIN4/I / DSM 18386 / JCM 14125)).